A 334-amino-acid chain; its full sequence is Ferrochelatase (334 aa).

2 residues coordinate Fe cation: His207 and Glu288.

The protein belongs to the ferrochelatase family.

The protein resides in the cytoplasm. It carries out the reaction heme b + 2 H(+) = protoporphyrin IX + Fe(2+). It participates in porphyrin-containing compound metabolism; protoheme biosynthesis; protoheme from protoporphyrin-IX: step 1/1. Its function is as follows. Catalyzes the ferrous insertion into protoporphyrin IX. The sequence is that of Ferrochelatase from Helicobacter pylori (strain ATCC 700392 / 26695) (Campylobacter pylori).